The primary structure comprises 421 residues: Protein HOMOLOG OF MAMMALIAN LYST-INTERACTING PROTEIN 5 (421 aa).

An N-acetylserine modification is found at Ser2. A disordered region spans residues 146–374; the sequence is IKEGRKPTPG…KYHYDSSYQP (229 aa). The span at 165–185 shows a compositional bias: polar residues; sequence SIPSSGPSGSYDHSASDTNTT. A compositionally biased stretch (basic and acidic residues) spans 188 to 207; it reads HRTELDPPHDSNDDSSHHQF. The segment covering 245-258 has biased composition (pro residues); the sequence is LPPPTGPSDSPYPH. Residues 278–293 show a composition bias toward polar residues; sequence NYSSHEPSPNSLPNFQ. Low complexity-rich tracts occupy residues 294–308 and 317–337; these read SYPS…STSP and PEPY…SFSS.

The protein belongs to the VTA1 family. Homodimer. Interacts with SKD1/VPS4, VPS60-1, CHMP1A and CHMP1B. Binds to PROS/At4g24370. Interacts with MPK6 and MPK3. Phosphorylated by activated MPK6 and MPK3, this activation is required to trigger multivesicular bodies (MVBs) trafficking upon plant infection.

It is found in the cytoplasm. Its subcellular location is the endosome membrane. It localises to the nucleus. The protein resides in the endosome. The protein localises to the multivesicular body. Its function is as follows. Involved in the endosomal multivesicular bodies (MVB) pathway. MVBs contain intraluminal vesicles (ILVs) that are generated by invagination and scission from the limiting membrane of the endosome and are delivered to lysosomes enabling degradation of membrane proteins. Thought to be a cofactor of SKD1/VPS4, which catalyzes the disassembly of membrane-associated ESCRT-III. Target of pathogen-responsive mitogen-activated protein kinases (MPKs) that plays a critical role in plant basal resistance to Pseudomonas syringae in a SKD1-dependent manner by promoting multivesicular bodies (MVBs) trafficking upon plant infection. The protein is Protein HOMOLOG OF MAMMALIAN LYST-INTERACTING PROTEIN 5 of Arabidopsis thaliana (Mouse-ear cress).